The chain runs to 138 residues: Cysteine desulfuration protein SufE (138 aa).

Catalysis depends on cysteine 51, which acts as the Cysteine persulfide intermediate.

This sequence belongs to the SufE family. In terms of assembly, homodimer. Interacts with SufS.

The protein resides in the cytoplasm. Its pathway is cofactor biosynthesis; iron-sulfur cluster biosynthesis. Participates in cysteine desulfuration mediated by SufS. Cysteine desulfuration mobilizes sulfur from L-cysteine to yield L-alanine and constitutes an essential step in sulfur metabolism for biosynthesis of a variety of sulfur-containing biomolecules. Functions as a sulfur acceptor for SufS, by mediating the direct transfer of the sulfur atom from the S-sulfanylcysteine of SufS, an intermediate product of cysteine desulfuration process. This Klebsiella pneumoniae subsp. pneumoniae (strain ATCC 700721 / MGH 78578) protein is Cysteine desulfuration protein SufE.